The chain runs to 145 residues: DNA polymerase epsilon subunit 3 (145 aa).

The residue at position 2 (Ala-2) is an N-acetylalanine. Position 83 is a phosphothreonine (Thr-83). The stretch at 85 to 144 forms a coiled coil; sequence LKEALEAYRREQKGKKEASEQKKKDKDKKDCEEQDKSREEEDEDEERLDEEEQNEEEEVD. Residues 93–123 are compositionally biased toward basic and acidic residues; the sequence is RREQKGKKEASEQKKKDKDKKDCEEQDKSRE. The segment at 93-145 is disordered; that stretch reads RREQKGKKEASEQKKKDKDKKDCEEQDKSREEEDEDEERLDEEEQNEEEEVDN. Ser-121 carries the post-translational modification Phosphoserine. The span at 124 to 145 shows a compositional bias: acidic residues; the sequence is EEDEDEERLDEEEQNEEEEVDN.

Component of the DNA polymerase epsilon complex consisting of four subunits: the catalytic subunit POLE and the accessory subunits POLE2, POLE3 and POLE4. Interaction with POLE4 is a prerequisite for further binding with POLE and POLE2. Heterodimer with CHRAC1; binds to DNA. Component of the CHRAC ISWI chromatin remodeling complex at least composed of SMARCA5/SNF2H, BAZ1A/ACF1, CHRAC1 and POLE3; the complex preferentially binds DNA through the CHRAC1-POLE3 heterodimer and possesses ATP-dependent nucleosome-remodeling activity. Within the complex, the heterodimer with CHRAC1 interacts with SMARCA5/SNF2H; the interaction is direct and enhances nucleosome sliding activity by the SMARCA5/SNF2H and BAZ1A/ACF1 interaction. Within the complex, the heterodimer with CHRAC1 interacts with BAZ1A/ACF1; the interactions are direct.

The protein localises to the nucleus. Its function is as follows. Accessory component of the DNA polymerase epsilon complex. Participates in DNA repair and in chromosomal DNA replication. Forms a complex with CHRAC1 and binds naked DNA, which is then incorporated into chromatin, aided by the nucleosome-remodeling activity of ISWI/SNF2H and ACF1. Does not enhance nucleosome sliding activity of the ACF-5 ISWI chromatin remodeling complex. This chain is DNA polymerase epsilon subunit 3 (Pole3), found in Rattus norvegicus (Rat).